We begin with the raw amino-acid sequence, 382 residues long: Inactive ubiquitin-specific protease 5 (382 aa).

The region spanning 16 to 141 is the DUSP domain; the sequence is VPAEEERALI…GGPTLPRKAI (126 aa). The 60-residue stretch at 323-382 folds into the USP domain; sequence TGLLNLGNTCFMNSAIQCLVHTPEFARYFREDYHREINWQNPLGMVVSTLSTSMALKPYV.

The protein belongs to the peptidase C19 family. As to expression, widely expressed with the highest expression in floral organs.

Its subcellular location is the cell membrane. Its function is as follows. Plays an important role in the development of floral organs and chloroplasts. Does not possess deubiquitinating enzyme activity in vitro. This is Inactive ubiquitin-specific protease 5 from Oryza sativa subsp. japonica (Rice).